Here is a 217-residue protein sequence, read N- to C-terminus: Small ribosomal subunit protein uS3c (217 aa).

One can recognise a KH type-2 domain in the interval 39–109 (IRSCIEKQLH…QIRINLIEIT (71 aa)).

It belongs to the universal ribosomal protein uS3 family. As to quaternary structure, part of the 30S ribosomal subunit.

It is found in the plastid. The protein localises to the chloroplast. The polypeptide is Small ribosomal subunit protein uS3c (rps3) (Gracilaria tenuistipitata var. liui (Red alga)).